A 267-amino-acid chain; its full sequence is Serine/threonine-protein kinase 1 (267 aa).

Positions isoleucine 18–leucine 266 constitute a Protein kinase domain. ATP-binding positions include leucine 24 to methionine 32 and lysine 47. Aspartate 134 (proton acceptor) is an active-site residue.

It belongs to the protein kinase superfamily. Ser/Thr protein kinase family.

The enzyme catalyses L-seryl-[protein] + ATP = O-phospho-L-seryl-[protein] + ADP + H(+). The catalysed reaction is L-threonyl-[protein] + ATP = O-phospho-L-threonyl-[protein] + ADP + H(+). The polypeptide is Serine/threonine-protein kinase 1 (PK1) (Heliothis zea nuclear polyhedrosis virus (HzSNPV)).